Consider the following 196-residue polypeptide: Heat shock protein beta-8 (196 aa).

Residues 1-35 (MADGQMPFSCHYPSRLRRDPFRDSPLPSRLLDDDF) form a disordered region. Phosphoserine occurs at positions 24 and 57. Thr63 carries the phosphothreonine modification. 2 positions are modified to asymmetric dimethylarginine: Arg71 and Arg78. Residues 74–185 (TAAARFGVPA…PFGESNFNNE (112 aa)) enclose the sHSP domain. Ser87 carries the post-translational modification Phosphoserine. Residues 176–196 (PFGESNFNNELPQDSQEVTCT) are disordered. The span at 178-196 (GESNFNNELPQDSQEVTCT) shows a compositional bias: polar residues.

The protein belongs to the small heat shock protein (HSP20) family. As to quaternary structure, monomer. Forms a ternary complex with BAG3 and HSPA1A. Component of the chaperone-assisted selective autophagy (CASA) complex consisting of BAG3, HSPA8/HSC70, HSPB8 and STUB1/CHIP. Interacts with HSPB1. Interacts with DNAJB6. Interacts with BAG3. Post-translationally, phosphorylated.

It is found in the cytoplasm. The protein localises to the nucleus. Its function is as follows. Involved in the chaperone-assisted selective autophagy (CASA), a crucial process for protein quality control, particularly in mechanical strained cells and tissues such as muscle. Displays temperature-dependent chaperone activity. The chain is Heat shock protein beta-8 (HSPB8) from Canis lupus familiaris (Dog).